We begin with the raw amino-acid sequence, 973 residues long: EF-hand calcium-binding domain-containing protein 13 (973 aa).

The segment at 384 to 448 (YSKNGINFKK…HSSLQKQVSS (65 aa)) is disordered. Residues 396-405 (EKGEIHDSKS) are compositionally biased toward basic and acidic residues. Positions 406–418 (KPQSLKSSTSLSK) are enriched in low complexity. EF-hand domains are found at residues 488–523 (LLDE…ERSF), 524–559 (PECN…FGIY), 633–668 (LKKD…MRDA), 756–791 (PKVN…LNVN), 792–827 (LTEE…SPHF), and 864–899 (TANA…ILTI).

This chain is EF-hand calcium-binding domain-containing protein 13 (EFCAB13), found in Homo sapiens (Human).